The following is a 209-amino-acid chain: Peptide deformylase 2 (209 aa).

2 residues coordinate Fe cation: Cys101 and His149. Residue Glu150 is part of the active site. His153 serves as a coordination point for Fe cation.

Belongs to the polypeptide deformylase family. Requires Fe(2+) as cofactor.

The enzyme catalyses N-terminal N-formyl-L-methionyl-[peptide] + H2O = N-terminal L-methionyl-[peptide] + formate. Functionally, removes the formyl group from the N-terminal Met of newly synthesized proteins. Requires at least a dipeptide for an efficient rate of reaction. N-terminal L-methionine is a prerequisite for activity but the enzyme has broad specificity at other positions. The chain is Peptide deformylase 2 from Coxiella burnetii (strain RSA 493 / Nine Mile phase I).